We begin with the raw amino-acid sequence, 260 residues long: Triosephosphate isomerase (260 aa).

11–13 contributes to the substrate binding site; that stretch reads NWK. The Electrophile role is filled by H103. E175 acts as the Proton acceptor in catalysis. Residues G181, S220, and 241-242 each bind substrate; that span reads GG.

It belongs to the triosephosphate isomerase family. Homodimer.

It is found in the cytoplasm. The enzyme catalyses D-glyceraldehyde 3-phosphate = dihydroxyacetone phosphate. Its pathway is carbohydrate biosynthesis; gluconeogenesis. The protein operates within carbohydrate degradation; glycolysis; D-glyceraldehyde 3-phosphate from glycerone phosphate: step 1/1. Involved in the gluconeogenesis. Catalyzes stereospecifically the conversion of dihydroxyacetone phosphate (DHAP) to D-glyceraldehyde-3-phosphate (G3P). This is Triosephosphate isomerase from Shewanella piezotolerans (strain WP3 / JCM 13877).